Here is a 436-residue protein sequence, read N- to C-terminus: Trigger factor (436 aa).

The 86-residue stretch at 163–248 (GDQVIIDFVG…VHSVQTKVLP (86 aa)) folds into the PPIase FKBP-type domain.

It belongs to the FKBP-type PPIase family. Tig subfamily.

It localises to the cytoplasm. The catalysed reaction is [protein]-peptidylproline (omega=180) = [protein]-peptidylproline (omega=0). In terms of biological role, involved in protein export. Acts as a chaperone by maintaining the newly synthesized protein in an open conformation. Functions as a peptidyl-prolyl cis-trans isomerase. The protein is Trigger factor of Hydrogenovibrio crunogenus (strain DSM 25203 / XCL-2) (Thiomicrospira crunogena).